A 222-amino-acid chain; its full sequence is Charged multivesicular body protein 2a (222 aa).

Methionine 1 is subject to N-acetylmethionine. A coiled-coil region spans residues 12 to 53; that stretch reads EELLRQNQRALNRAMRELDRERQKLETQEKKIIADIKKMAKQ. The interaction with VPS4B stretch occupies residues 56–222; that stretch reads MDAVRIMAKD…EERLKNLRRD (167 aa). At serine 184 the chain carries Phosphoserine. Threonine 185 is subject to Phosphothreonine. Phosphoserine is present on residues serine 188, serine 190, and serine 203. The stretch at 195–222 forms a coiled coil; it reads GKKAEAAASALADADADLEERLKNLRRD. Residues 210-220 carry the MIT-interacting motif motif; the sequence is ADLEERLKNLR. The interval 217-222 is interaction with VTA1; that stretch reads KNLRRD.

Belongs to the SNF7 family. In terms of assembly, probable core component of the endosomal sorting required for transport complex III (ESCRT-III). ESCRT-III components are thought to multimerize to form a flat lattice on the perimeter membrane of the endosome. Several assembly forms of ESCRT-III may exist that interact and act sequentially. In vitro, heteromerizes with CHMP3 (but not CHMP4) to form helical tubular structures that expose membrane-interacting sites on the outside whereas VPS4B can associate on the inside of the tubule. Interacts with CHMP1B, CHMP2B, CHMP3, CHMP4A, CHMP4B, CHMP4C and CHMP5. Interacts with VPS4A; the interaction is direct. Interacts with VPS4B; the interaction is direct. Interacts with MITD1. Interacts with VTA1; the interaction probably involves the open conformation of CHMP2A. In terms of processing, ISGylated in a CHMP5-dependent manner. Isgylation weakens and inhibits its interactions with VPS4A and VTA1 respectively.

The protein resides in the late endosome membrane. The protein localises to the nucleus envelope. In terms of biological role, probable core component of the endosomal sorting required for transport complex III (ESCRT-III) which is involved in multivesicular bodies (MVBs) formation and sorting of endosomal cargo proteins into MVBs. MVBs contain intraluminal vesicles (ILVs) that are generated by invagination and scission from the limiting membrane of the endosome and mostly are delivered to lysosomes enabling degradation of membrane proteins, such as stimulated growth factor receptors, lysosomal enzymes and lipids. The MVB pathway appears to require the sequential function of ESCRT-O, -I,-II and -III complexes. ESCRT-III proteins mostly dissociate from the invaginating membrane before the ILV is released. The ESCRT machinery also functions in topologically equivalent membrane fission events, such as the terminal stages of cytokinesis. Together with SPAST, the ESCRT-III complex promotes nuclear envelope sealing and mitotic spindle disassembly during late anaphase. Recruited to the reforming nuclear envelope (NE) during anaphase by LEMD2. ESCRT-III proteins are believed to mediate the necessary vesicle extrusion and/or membrane fission activities, possibly in conjunction with the AAA ATPase VPS4. Functionally, (Microbial infection) The ESCRT machinery functions in topologically equivalent membrane fission events, such as the budding of enveloped viruses (HIV-1 and other lentiviruses). Involved in HIV-1 p6- and p9-dependent virus release. The protein is Charged multivesicular body protein 2a (CHMP2A) of Homo sapiens (Human).